A 148-amino-acid polypeptide reads, in one-letter code: D-aminoacyl-tRNA deacylase (148 aa).

Residues 137–138 (GP) carry the Gly-cisPro motif, important for rejection of L-amino acids motif.

The protein belongs to the DTD family. Homodimer.

The protein localises to the cytoplasm. The enzyme catalyses glycyl-tRNA(Ala) + H2O = tRNA(Ala) + glycine + H(+). It catalyses the reaction a D-aminoacyl-tRNA + H2O = a tRNA + a D-alpha-amino acid + H(+). In terms of biological role, an aminoacyl-tRNA editing enzyme that deacylates mischarged D-aminoacyl-tRNAs. Also deacylates mischarged glycyl-tRNA(Ala), protecting cells against glycine mischarging by AlaRS. Acts via tRNA-based rather than protein-based catalysis; rejects L-amino acids rather than detecting D-amino acids in the active site. By recycling D-aminoacyl-tRNA to D-amino acids and free tRNA molecules, this enzyme counteracts the toxicity associated with the formation of D-aminoacyl-tRNA entities in vivo and helps enforce protein L-homochirality. In Finegoldia magna (strain ATCC 29328 / DSM 20472 / WAL 2508) (Peptostreptococcus magnus), this protein is D-aminoacyl-tRNA deacylase.